Reading from the N-terminus, the 36-residue chain is Lambda-hexatoxin-Hv1b (36 aa).

4 cysteine pairs are disulfide-bonded: C3-C17, C10-C22, C13-C14, and C16-C33.

The protein belongs to the neurotoxin 11 (kappa toxin) family. As to expression, expressed by the venom gland.

The protein localises to the secreted. In terms of biological role, this excitatory toxin inhibits insect calcium-activated potassium (KCa) channels (Slo-type). The chain is Lambda-hexatoxin-Hv1b from Hadronyche versuta (Blue mountains funnel-web spider).